A 398-amino-acid polypeptide reads, in one-letter code: Phosphomevalonate dehydratase large subunit (398 aa).

Residues G48, V49, S50, N76, and P77 each contribute to the (R)-5-phosphomevalonate site. C116 is a [4Fe-4S] cluster binding site. (R)-5-phosphomevalonate contacts are provided by E136 and S137. Residues C287 and C342 each contribute to the [4Fe-4S] cluster site. Position 361 (K361) interacts with (R)-5-phosphomevalonate.

The protein belongs to the AcnX type II large subunit family. Heterodimer composed of a large subunit (PMDh-L) and a small subunit (PMDh-S). The cofactor is [4Fe-4S] cluster.

The catalysed reaction is (R)-5-phosphomevalonate = (2E)-3-methyl-5-phosphooxypent-2-enoate + H2O. The protein operates within isoprenoid biosynthesis; isopentenyl diphosphate biosynthesis via mevalonate pathway. In terms of biological role, component of a hydro-lyase that catalyzes the dehydration of mevalonate 5-phosphate (MVA5P) to form trans-anhydromevalonate 5-phosphate (tAHMP). Involved in the archaeal mevalonate (MVA) pathway, which provides fundamental precursors for isoprenoid biosynthesis, such as isopentenyl diphosphate (IPP) and dimethylallyl diphosphate (DMAPP). This is Phosphomevalonate dehydratase large subunit from Methanosarcina mazei (strain ATCC BAA-159 / DSM 3647 / Goe1 / Go1 / JCM 11833 / OCM 88) (Methanosarcina frisia).